The sequence spans 283 residues: Elongation factor Ts (283 aa).

Residues 80–83 are involved in Mg(2+) ion dislocation from EF-Tu; that stretch reads TDFV.

Belongs to the EF-Ts family.

It is found in the cytoplasm. Its function is as follows. Associates with the EF-Tu.GDP complex and induces the exchange of GDP to GTP. It remains bound to the aminoacyl-tRNA.EF-Tu.GTP complex up to the GTP hydrolysis stage on the ribosome. This is Elongation factor Ts from Klebsiella pneumoniae (strain 342).